The chain runs to 1032 residues: MGPCRGALHPLSLLVQAAALALALAQGTLPAFLPCELQPHGLVNCNWLFLKSVPRFSAAAPRGNVTSLSLYSNRIHHLHDYDFVHFVHLRRLNLKWNCPPASLSPMHFPCHMTIEPNTFLAVPTLEDLNLSYNSITTVPALPSSLVSLSLSRTNILVLDPATLAGLYALRFLFLDGNCYYKNPCQQALQVAPGALLGLGNLTHLSLKYNNLTVVPRGLPPSLEYLLLSYNHIITLAPEDLANLTALRVLDVGGNCRRCDHARNPCRECPKGFPQLHPNTFGHLSHLEGLVLRDSSLYSLDPRWFHGLGNLMVLDLSENFLYDCITKTKAFYGLARLRRLNLSFNYHKKVSFAHLHLASSFGSLLSLQELDIHGIFFRSLSKTTLQSLAHLPMLQRLHLQLNFISQAQLSIFGAFPGLRYVDLSDNRISGAAEPAAATGEVEADCGERVWPQSRDLALGPLGTPGSEAFMPSCRTLNFTLDLSRNNLVTVQPEMFVRLARLQCLGLSHNSISQAVNGSQFVPLSNLRVLDLSHNKLDLYHGRSFTELPRLEALDLSYNSQPFSMRGVGHNLSFVAQLPALRYLSLAHNGIHSRVSQQLRSASLRALDFSGNTLSQMWAEGDLYLRFFQGLRSLVQLDLSQNRLHTLLPRNLDNLPKSLRLLRLRDNYLAFFNWSSLALLPKLEALDLAGNQLKALSNGSLPNGTQLQRLDLSGNSIGFVVPSFFALAVRLRELNLSANALKTVEPSWFGSLAGALKVLDVTANPLHCACGATFVDFLLEVQAAVPGLPSRVKCGSPGQLQGRSIFAQDLRLCLDEALSWVCFSLSLLAVALSLAVPMLHQLCGWDLWYCFHLCLAWLPRRGRRRGVDALAYDAFVVFDKAQSSVADWVYNELRVQLEERRGRRALRLCLEERDWVPGKTLFENLWASVYSSRKTLFVLARTDRVSGLLRASFLLAQQRLLEDRKDVVVLVILCPDAHRSRYVRLRQRLCRQSVLLWPHQPSGQRSFWAQLGTALTRDNRHFYNQNFCRGPTTA.

The N-terminal stretch at 1–25 (MGPCRGALHPLSLLVQAAALALALA) is a signal peptide. The Extracellular portion of the chain corresponds to 26–815 (QGTLPAFLPC…QDLRLCLDEA (790 aa)). Cysteine 35 and cysteine 45 are disulfide-bonded. A DNA-binding site is contributed by 47–51 (WLFLK). LRR repeat units lie at residues 62-85 (RGNV…DFVH), 87-110 (VHLR…HFPC), 122-147 (VPTL…SLVS), 150-166 (LSRT…LAGL), 167-190 (YALR…ALQV), 198-221 (LGNL…LPPS), 223-242 (EYLL…DLAN), 243-268 (LTAL…CREC), 283-306 (LSHL…WFHG), 308-332 (GNLM…AFYG), 333-356 (LARL…HLHL), 363-386 (LLSL…TLQS), 390-413 (LPML…IFGA), 415-440 (PGLR…TGEV), 472-496 (CRTL…MFVR), 498-521 (ARLQ…QFVP), 522-545 (LSNL…SFTE), 547-574 (PRLE…SFVA), 576-600 (LPAL…LRSA), 602-624 (LRAL…LYLR), 629-652 (LRSL…NLDN), 654-677 (PKSL…SLAL), 678-701 (LPKL…SLPN), 703-725 (TQLQ…FFAL), 726-749 (AVRL…WFGS), and 751-774 (AGAL…TFVD). N-linked (GlcNAc...) asparagine glycosylation occurs at asparagine 64. DNA is bound by residues 72-77 (SNRIHH) and 95-109 (KWNC…MHFP). A disulfide bridge connects residues cysteine 98 and cysteine 110. Asparagine 129 is a glycosylation site (N-linked (GlcNAc...) asparagine). DNA is bound by residues tyrosine 132, arginine 152, and 179 to 181 (YYK). Cysteine 178 and cysteine 184 are oxidised to a cystine. Asparagine 200 is a glycosylation site (N-linked (GlcNAc...) asparagine). Position 208 (tyrosine 208) interacts with DNA. N-linked (GlcNAc...) asparagine glycosylation is found at asparagine 210 and asparagine 242. 2 disulfides stabilise this stretch: cysteine 255-cysteine 268 and cysteine 258-cysteine 265. Cysteine 258 is lipidated: S-palmitoyl cysteine. Arginine 262 is a binding site for DNA. A lipid anchor (S-palmitoyl cysteine) is attached at cysteine 265. A glycan (N-linked (GlcNAc...) asparagine) is linked at asparagine 340. A disulfide bond links cysteine 472 and cysteine 502. 2 N-linked (GlcNAc...) asparagine glycosylation sites follow: asparagine 476 and asparagine 515. N-linked (GlcNAc...) asparagine glycosylation is present at asparagine 569. Asparagine 671, asparagine 696, and asparagine 701 each carry an N-linked (GlcNAc...) asparagine glycan. An N-linked (GlcNAc...) asparagine glycan is attached at asparagine 733. 2 disulfides stabilise this stretch: cysteine 766/cysteine 792 and cysteine 768/cysteine 811. Residues 816–836 (LSWVCFSLSLLAVALSLAVPM) traverse the membrane as a helical segment. Residues 837–1032 (LHQLCGWDLW…QNFCRGPTTA (196 aa)) are Cytoplasmic-facing. Positions 868–1013 (LAYDAFVVFD…SFWAQLGTAL (146 aa)) constitute a TIR domain.

This sequence belongs to the Toll-like receptor family. In terms of assembly, monomer and homodimer. Exists as a monomer in the absence of unmethylated cytidine-phosphate-guanosine (CpG) ligand. Proteolytic processing of an insertion loop (Z-loop) is required for homodimerization upon binding to the unmethylated CpG ligand leading to its activation. Interacts with MYD88 via their respective TIR domains. Interacts with BTK. Interacts (via transmembrane domain) with UNC93B1. Interacts with CD300LH; the interaction may promote full activation of TLR9-triggered innate responses. Interacts with CNPY3 and HSP90B1; this interaction is required for proper folding in the endoplasmic reticulum. Interacts with SMPDL3B. Interacts with CD82; this interaction is essential for TLR9-dependent myddosome formation in response to CpG stimulation. Activated by proteolytic cleavage of the flexible loop between repeats LRR14 and LRR15 within the ectodomain. Cleavage requires UNC93B1. Proteolytically processed by first removing the majority of the ectodomain by either asparagine endopeptidase (AEP) or a cathepsin followed by a trimming event that is solely cathepsin mediated and required for optimal receptor signaling. In terms of processing, palmitoylated by ZDHHC3 in the Golgi regulates TLR9 trafficking from the Golgi to endosomes. Depalmitoylation by PPT1 controls the release of TLR9 from UNC93B1 in endosomes.

The protein localises to the endoplasmic reticulum membrane. Its subcellular location is the endosome. It is found in the lysosome. It localises to the cytoplasmic vesicle. The protein resides in the phagosome. Key component of innate and adaptive immunity. TLRs (Toll-like receptors) control host immune response against pathogens through recognition of molecular patterns specific to microorganisms. TLR9 is a nucleotide-sensing TLR which is activated by unmethylated cytidine-phosphate-guanosine (CpG) dinucleotides. Acts via MYD88 and TRAF6, leading to NF-kappa-B activation, cytokine secretion and the inflammatory response. Upon CpG stimulation, induces B-cell proliferation, activation, survival and antibody production. In Canis lupus familiaris (Dog), this protein is Toll-like receptor 9 (TLR9).